The following is a 479-amino-acid chain: ATP-dependent protease ATPase subunit HslU (479 aa).

Residues isoleucine 32, 74–79, aspartate 290, glutamate 355, and arginine 427 each bind ATP; that span reads GVGKTE.

Belongs to the ClpX chaperone family. HslU subfamily. A double ring-shaped homohexamer of HslV is capped on each side by a ring-shaped HslU homohexamer. The assembly of the HslU/HslV complex is dependent on binding of ATP.

It localises to the cytoplasm. Its function is as follows. ATPase subunit of a proteasome-like degradation complex; this subunit has chaperone activity. The binding of ATP and its subsequent hydrolysis by HslU are essential for unfolding of protein substrates subsequently hydrolyzed by HslV. HslU recognizes the N-terminal part of its protein substrates and unfolds these before they are guided to HslV for hydrolysis. This chain is ATP-dependent protease ATPase subunit HslU, found in Leptospira interrogans serogroup Icterohaemorrhagiae serovar Lai (strain 56601).